Reading from the N-terminus, the 230-residue chain is Demethylmenaquinone methyltransferase (230 aa).

S-adenosyl-L-methionine contacts are provided by residues Thr62, Asp80, 100–101 (DG), and Ser117.

The protein belongs to the class I-like SAM-binding methyltransferase superfamily. MenG/UbiE family.

The catalysed reaction is a 2-demethylmenaquinol + S-adenosyl-L-methionine = a menaquinol + S-adenosyl-L-homocysteine + H(+). Its pathway is quinol/quinone metabolism; menaquinone biosynthesis; menaquinol from 1,4-dihydroxy-2-naphthoate: step 2/2. Its function is as follows. Methyltransferase required for the conversion of demethylmenaquinol (DMKH2) to menaquinol (MKH2). This chain is Demethylmenaquinone methyltransferase, found in Corynebacterium efficiens (strain DSM 44549 / YS-314 / AJ 12310 / JCM 11189 / NBRC 100395).